Consider the following 82-residue polypeptide: Transcription elongation factor 1 homolog (82 aa).

Residues Cys26, Cys29, Cys50, and Cys53 each coordinate Zn(2+).

It belongs to the ELOF1 family.

It localises to the nucleus. Functionally, transcription elongation factor implicated in the maintenance of proper chromatin structure in actively transcribed regions. In Manduca sexta (Tobacco hawkmoth), this protein is Transcription elongation factor 1 homolog.